We begin with the raw amino-acid sequence, 101 residues long: Large ribosomal subunit protein uL23 (101 aa).

This sequence belongs to the universal ribosomal protein uL23 family. Part of the 50S ribosomal subunit. Contacts protein L29, and trigger factor when it is bound to the ribosome.

In terms of biological role, one of the early assembly proteins it binds 23S rRNA. One of the proteins that surrounds the polypeptide exit tunnel on the outside of the ribosome. Forms the main docking site for trigger factor binding to the ribosome. This chain is Large ribosomal subunit protein uL23, found in Leptospira biflexa serovar Patoc (strain Patoc 1 / Ames).